A 247-amino-acid polypeptide reads, in one-letter code: Large ribosomal subunit protein uL24m (247 aa).

Positions 84 to 117 (FFRGDRIEVLVGKDKGKQGIVTQVIPERNWVIVE) constitute a KOW domain.

Belongs to the universal ribosomal protein uL24 family. As to quaternary structure, component of the mitochondrial ribosome large subunit (39S) which comprises a 16S rRNA and about 50 distinct proteins.

The protein resides in the mitochondrion. In Drosophila pseudoobscura pseudoobscura (Fruit fly), this protein is Large ribosomal subunit protein uL24m (mRpL24).